The sequence spans 463 residues: EPD1-interacting receptor-like cytoplasmic serine/threonine-protein kinase (463 aa).

Residues 91-383 form the Protein kinase domain; it reads FSSANFLGKG…LTDIPIGPFV (293 aa). Residues 97-105 and Lys-126 contribute to the ATP site; that span reads LGKGGFGPV. 2 positions are modified to phosphotyrosine: Tyr-171 and Tyr-173. The Proton acceptor role is filled by Asp-221.

Belongs to the protein kinase superfamily. Ser/Thr protein kinase family. In terms of assembly, interacts with the V.dahliae elicitor EPD1 (AC G2WWH6). Phosphorylated at Tyr-171 and Tyr-173 in the presence of pathogen-associated molecular patterns (PAMPs); this triggers the expression of pathogenesis-related genes.

The protein resides in the cell membrane. The catalysed reaction is L-seryl-[protein] + ATP = O-phospho-L-seryl-[protein] + ADP + H(+). The enzyme catalyses L-threonyl-[protein] + ATP = O-phospho-L-threonyl-[protein] + ADP + H(+). Its function is as follows. Required for pathogen-associated molecular pattern (PAMP, e.g. chitin and flg22)-triggered immunity (PTI) involving reactive oxygen species (ROS) accumulation and triggering plant defense, including defense-related gene expression (e.g. PR1 and LOX). Ensures specific recognition of the EPD1 effector of Verticillium dahliae, resulting in a hypersensitive response known as effector-triggered immunity (ETI), characterized by the activation of programmed cell death to limit infection by the pathogen. Priming plants with the incompatible pathogen V.dahliae leads to an increased resistance to both the broad-host-range filamentous pathogen Botrytis cinerea and the semibiotrophic pathogen Phytophthora capsici, as a result of systemic acquired resistance (SAR). The chain is EPD1-interacting receptor-like cytoplasmic serine/threonine-protein kinase from Nicotiana benthamiana.